Here is a 360-residue protein sequence, read N- to C-terminus: Photosystem II protein D1 (360 aa).

Helical transmembrane passes span 29–46, 118–133, and 142–156; these read YIGW…AATA, HFLL…QWEL, and WICV…SATA. His-118 is a binding site for chlorophyll a. Pheophytin a is bound at residue Tyr-126. 2 residues coordinate [CaMn4O5] cluster: Asp-170 and Glu-189. The chain crosses the membrane as a helical span at residues 197–218; sequence FHMLGVAGVFGGSLFSAMHGSL. His-198 is a binding site for chlorophyll a. Residues His-215 and 264 to 265 contribute to the a quinone site; that span reads SF. Residue His-215 participates in Fe cation binding. His-272 is a Fe cation binding site. A helical transmembrane segment spans residues 274 to 288; it reads FLAAWPVVGIWFTAL. 4 residues coordinate [CaMn4O5] cluster: His-332, Glu-333, Asp-342, and Ala-344. Residues 345 to 360 constitute a propeptide that is removed on maturation; sequence AGEVAPVALTAPAING.

This sequence belongs to the reaction center PufL/M/PsbA/D family. PSII is composed of 1 copy each of membrane proteins PsbA, PsbB, PsbC, PsbD, PsbE, PsbF, PsbH, PsbI, PsbJ, PsbK, PsbL, PsbM, PsbT, PsbX, PsbY, PsbZ, Psb30/Ycf12, peripheral proteins PsbO, CyanoQ (PsbQ), PsbU, PsbV and a large number of cofactors. It forms dimeric complexes. Requires The D1/D2 heterodimer binds P680, chlorophylls that are the primary electron donor of PSII, and subsequent electron acceptors. It shares a non-heme iron and each subunit binds pheophytin, quinone, additional chlorophylls, carotenoids and lipids. D1 provides most of the ligands for the Mn4-Ca-O5 cluster of the oxygen-evolving complex (OEC). There is also a Cl(-1) ion associated with D1 and D2, which is required for oxygen evolution. The PSII complex binds additional chlorophylls, carotenoids and specific lipids. as cofactor. Tyr-161 forms a radical intermediate that is referred to as redox-active TyrZ, YZ or Y-Z. Post-translationally, C-terminally processed by CtpA; processing is essential to allow assembly of the oxygen-evolving complex and thus photosynthetic growth.

The protein localises to the cellular thylakoid membrane. It catalyses the reaction 2 a plastoquinone + 4 hnu + 2 H2O = 2 a plastoquinol + O2. In terms of biological role, photosystem II (PSII) is a light-driven water:plastoquinone oxidoreductase that uses light energy to abstract electrons from H(2)O, generating O(2) and a proton gradient subsequently used for ATP formation. It consists of a core antenna complex that captures photons, and an electron transfer chain that converts photonic excitation into a charge separation. The D1/D2 (PsbA/PsbD) reaction center heterodimer binds P680, the primary electron donor of PSII as well as several subsequent electron acceptors. The sequence is that of Photosystem II protein D1 from Microchaete diplosiphon (Fremyella diplosiphon).